Consider the following 427-residue polypeptide: Serine hydroxymethyltransferase (427 aa).

(6S)-5,6,7,8-tetrahydrofolate contacts are provided by residues L127 and 131–133 (GHL). At K236 the chain carries N6-(pyridoxal phosphate)lysine.

This sequence belongs to the SHMT family. In terms of assembly, homodimer. Requires pyridoxal 5'-phosphate as cofactor.

It localises to the cytoplasm. It catalyses the reaction (6R)-5,10-methylene-5,6,7,8-tetrahydrofolate + glycine + H2O = (6S)-5,6,7,8-tetrahydrofolate + L-serine. It participates in one-carbon metabolism; tetrahydrofolate interconversion. The protein operates within amino-acid biosynthesis; glycine biosynthesis; glycine from L-serine: step 1/1. Catalyzes the reversible interconversion of serine and glycine with tetrahydrofolate (THF) serving as the one-carbon carrier. This reaction serves as the major source of one-carbon groups required for the biosynthesis of purines, thymidylate, methionine, and other important biomolecules. Also exhibits THF-independent aldolase activity toward beta-hydroxyamino acids, producing glycine and aldehydes, via a retro-aldol mechanism. The chain is Serine hydroxymethyltransferase from Paramagnetospirillum magneticum (strain ATCC 700264 / AMB-1) (Magnetospirillum magneticum).